We begin with the raw amino-acid sequence, 113 residues long: Large ribosomal subunit protein bL20c (113 aa).

This sequence belongs to the bacterial ribosomal protein bL20 family.

The protein localises to the plastid. It localises to the chloroplast. Its function is as follows. Binds directly to 23S ribosomal RNA and is necessary for the in vitro assembly process of the 50S ribosomal subunit. It is not involved in the protein synthesizing functions of that subunit. This chain is Large ribosomal subunit protein bL20c, found in Nephroselmis olivacea (Green alga).